The chain runs to 567 residues: Phosphoglucomutase-like protein 5 (567 aa).

Residues M1–G26 form a disordered region. T120 bears the Phosphothreonine mark. S122 carries the post-translational modification Phosphoserine.

This sequence belongs to the phosphohexose mutase family. Interacts with DMD/dystrophin; the interaction is direct. Interacts with UTRN/utrophin.

The protein localises to the cell junction. It localises to the adherens junction. Its subcellular location is the cytoplasm. It is found in the cytoskeleton. The protein resides in the cell membrane. The protein localises to the sarcolemma. Its function is as follows. Component of adherens-type cell-cell and cell-matrix junctions. Has no phosphoglucomutase activity in vitro. The sequence is that of Phosphoglucomutase-like protein 5 from Mus musculus (Mouse).